A 220-amino-acid chain; its full sequence is Probable N-acetyl-alpha-D-glucosaminyl L-malate deacetylase 2 (220 aa).

The Zn(2+) site is built by H11, D14, and H125.

This sequence belongs to the PIGL family. The cofactor is Zn(2+).

The catalysed reaction is (S)-malyl N-acetyl-alpha-D-glucosaminide + H2O = (S)-malyl alpha-D-glucosaminide + acetate. Functionally, involved in bacillithiol (BSH) biosynthesis. Catalyzes the second step of the pathway, the deacetylation of N-acetylglucosaminylmalate (GlcNAc-Mal) to glucosamine malate (GlcN-Mal). Has weak activity compared with bshB1. In Bacillus cereus (strain ATCC 14579 / DSM 31 / CCUG 7414 / JCM 2152 / NBRC 15305 / NCIMB 9373 / NCTC 2599 / NRRL B-3711), this protein is Probable N-acetyl-alpha-D-glucosaminyl L-malate deacetylase 2.